Reading from the N-terminus, the 440-residue chain is Ribulose bisphosphate carboxylase large chain (440 aa).

At Lys4 the chain carries N6,N6,N6-trimethyllysine. Substrate is bound by residues Asn113 and Thr163. Lys165 (proton acceptor) is an active-site residue. Lys167 is a substrate binding site. 3 residues coordinate Mg(2+): Lys191, Asp193, and Glu194. At Lys191 the chain carries N6-carboxylysine. Catalysis depends on His284, which acts as the Proton acceptor. Substrate-binding residues include Arg285, His317, and Ser369.

Belongs to the RuBisCO large chain family. Type I subfamily. In terms of assembly, heterohexadecamer of 8 large chains and 8 small chains; disulfide-linked. The disulfide link is formed within the large subunit homodimers. Requires Mg(2+) as cofactor. In terms of processing, the disulfide bond which can form in the large chain dimeric partners within the hexadecamer appears to be associated with oxidative stress and protein turnover.

The protein resides in the plastid. The protein localises to the chloroplast. The enzyme catalyses 2 (2R)-3-phosphoglycerate + 2 H(+) = D-ribulose 1,5-bisphosphate + CO2 + H2O. The catalysed reaction is D-ribulose 1,5-bisphosphate + O2 = 2-phosphoglycolate + (2R)-3-phosphoglycerate + 2 H(+). RuBisCO catalyzes two reactions: the carboxylation of D-ribulose 1,5-bisphosphate, the primary event in carbon dioxide fixation, as well as the oxidative fragmentation of the pentose substrate in the photorespiration process. Both reactions occur simultaneously and in competition at the same active site. This chain is Ribulose bisphosphate carboxylase large chain, found in Dicksonia antarctica (Australian tree fern).